A 697-amino-acid polypeptide reads, in one-letter code: Glycine--tRNA ligase beta subunit (697 aa).

This sequence belongs to the class-II aminoacyl-tRNA synthetase family. In terms of assembly, tetramer of two alpha and two beta subunits.

It localises to the cytoplasm. It catalyses the reaction tRNA(Gly) + glycine + ATP = glycyl-tRNA(Gly) + AMP + diphosphate. In Cereibacter sphaeroides (strain ATCC 17023 / DSM 158 / JCM 6121 / CCUG 31486 / LMG 2827 / NBRC 12203 / NCIMB 8253 / ATH 2.4.1.) (Rhodobacter sphaeroides), this protein is Glycine--tRNA ligase beta subunit.